A 285-amino-acid polypeptide reads, in one-letter code: TATA box-binding protein-associated factor RNA polymerase I subunit D (285 aa).

Disordered regions lie at residues 1 to 49 and 85 to 112; these read MAQS…RIPT and KKKR…TRNI. Positions 21 to 39 are enriched in polar residues; that stretch reads GNQSDDSSNSSLFKTQCVP. Ser-24 carries the phosphoserine modification. Residues 85 to 104 show a composition bias toward basic residues; sequence KKKRKKRKKRKYKPKLRRQG. Ser-134 carries the phosphoserine modification. Positions 193–219 are disordered; the sequence is HKYMDDDGPLSPIEEPSTEDEATDPQS. Ser-229 bears the Phosphoserine mark. Basic and acidic residues-rich tracts occupy residues 242-264 and 273-285; these read NLEQ…KDAT and KGGE…SEVS. The tract at residues 242 to 285 is disordered; that stretch reads NLEQGKIKKESAFSKKSKAKDATQRGNRRSWKGGEHACLHSEVS.

Component of the transcription factor SL1/TIF-IB complex, composed of TBP and at least TAF1A, TAF1B, TAF1C and TAF1D. Interacts with UBTF.

It is found in the nucleus. In terms of biological role, component of the transcription factor SL1/TIF-IB complex, which is involved in the assembly of the PIC (preinitiation complex) during RNA polymerase I-dependent transcription. The rate of PIC formation probably is primarily dependent on the rate of association of SL1/TIF-IB with the rDNA promoter. SL1/TIF-IB is involved in stabilization of nucleolar transcription factor 1/UBTF on rDNA. Formation of SL1/TIF-IB excludes the association of TBP with TFIID subunits. This chain is TATA box-binding protein-associated factor RNA polymerase I subunit D (Taf1d), found in Rattus norvegicus (Rat).